A 644-amino-acid polypeptide reads, in one-letter code: Threonine--tRNA ligase (644 aa).

In terms of domain architecture, TGS spans 1 to 61 (MNVTIEGQVF…ADTTTIEPVF (61 aa)). The segment at 241-532 (DHRKLGQQLD…LTEHFAGAFP (292 aa)) is catalytic. Zn(2+)-binding residues include Cys-333, His-384, and His-509.

Belongs to the class-II aminoacyl-tRNA synthetase family. As to quaternary structure, homodimer. Zn(2+) serves as cofactor.

It is found in the cytoplasm. It catalyses the reaction tRNA(Thr) + L-threonine + ATP = L-threonyl-tRNA(Thr) + AMP + diphosphate + H(+). In terms of biological role, catalyzes the attachment of threonine to tRNA(Thr) in a two-step reaction: L-threonine is first activated by ATP to form Thr-AMP and then transferred to the acceptor end of tRNA(Thr). Also edits incorrectly charged L-seryl-tRNA(Thr). The polypeptide is Threonine--tRNA ligase (Nitratidesulfovibrio vulgaris (strain DSM 19637 / Miyazaki F) (Desulfovibrio vulgaris)).